We begin with the raw amino-acid sequence, 456 residues long: Bifunctional protein GlmU (456 aa).

The interval 1 to 229 (MSSHAMSVVI…LSEVEGVNNR (229 aa)) is pyrophosphorylase. UDP-N-acetyl-alpha-D-glucosamine is bound by residues 11–14 (LAAG), K25, Q76, 81–82 (GT), 103–105 (YGD), G140, E154, N169, and N227. Residue D105 participates in Mg(2+) binding. Position 227 (N227) interacts with Mg(2+). Positions 230–250 (LQLARLEHVYQAEQAEKLLLA) are linker. An N-acetyltransferase region spans residues 251–456 (GVMLRDPARF…QGWRRPVKKK (206 aa)). Positions 333 and 351 each coordinate UDP-N-acetyl-alpha-D-glucosamine. The Proton acceptor role is filled by H363. Y366 and N377 together coordinate UDP-N-acetyl-alpha-D-glucosamine. Acetyl-CoA-binding positions include A380, 386-387 (NY), S405, A423, and R440.

This sequence in the N-terminal section; belongs to the N-acetylglucosamine-1-phosphate uridyltransferase family. In the C-terminal section; belongs to the transferase hexapeptide repeat family. Homotrimer. It depends on Mg(2+) as a cofactor.

Its subcellular location is the cytoplasm. The enzyme catalyses alpha-D-glucosamine 1-phosphate + acetyl-CoA = N-acetyl-alpha-D-glucosamine 1-phosphate + CoA + H(+). It carries out the reaction N-acetyl-alpha-D-glucosamine 1-phosphate + UTP + H(+) = UDP-N-acetyl-alpha-D-glucosamine + diphosphate. Its pathway is nucleotide-sugar biosynthesis; UDP-N-acetyl-alpha-D-glucosamine biosynthesis; N-acetyl-alpha-D-glucosamine 1-phosphate from alpha-D-glucosamine 6-phosphate (route II): step 2/2. The protein operates within nucleotide-sugar biosynthesis; UDP-N-acetyl-alpha-D-glucosamine biosynthesis; UDP-N-acetyl-alpha-D-glucosamine from N-acetyl-alpha-D-glucosamine 1-phosphate: step 1/1. It participates in bacterial outer membrane biogenesis; LPS lipid A biosynthesis. Its function is as follows. Catalyzes the last two sequential reactions in the de novo biosynthetic pathway for UDP-N-acetylglucosamine (UDP-GlcNAc). The C-terminal domain catalyzes the transfer of acetyl group from acetyl coenzyme A to glucosamine-1-phosphate (GlcN-1-P) to produce N-acetylglucosamine-1-phosphate (GlcNAc-1-P), which is converted into UDP-GlcNAc by the transfer of uridine 5-monophosphate (from uridine 5-triphosphate), a reaction catalyzed by the N-terminal domain. The sequence is that of Bifunctional protein GlmU from Cronobacter sakazakii (strain ATCC BAA-894) (Enterobacter sakazakii).